Here is a 1008-residue protein sequence, read N- to C-terminus: RNA cytidine acetyltransferase (1008 aa).

Residues 282–291 (GRGKSAALGL) and arginine 443 contribute to the ATP site. An N-acetyltransferase domain is found at 531-713 (CLLGPVQRMD…VPVYLSQKSN (183 aa)). Residues 601-603 (VAT), 608-614 (QRMGYGK), and asparagine 700 each bind acetyl-CoA. Serine 907 is modified (phosphoserine). Positions 950 to 1008 (ALETNGTGGGSGLLSVKSGVKRLDGPIETREDGDLAAPLSKKKKKNNPKQRRSQGKSLI) are disordered. Residues 970 to 982 (KRLDGPIETREDG) are compositionally biased toward basic and acidic residues. A compositionally biased stretch (basic residues) spans 989-1008 (SKKKKKNNPKQRRSQGKSLI).

This sequence belongs to the RNA cytidine acetyltransferase family. NAT10 subfamily. As to quaternary structure, component of the PRC1 complex (PSC, PC, PH and dRING1) in 0-12 hours Drosophila embryos. This complex is distinct from the Esc/E(z) complex, which contains many other PcG proteins like Esc, E(z), Su(z)12, HDAC1/Rpd3, Caf1-55 and probably Pho. The two complexes however cooperate and interact together during the first 3 hours of development to establish PcG silencing. Part of the small subunit (SSU) processome, composed of more than 70 proteins and the RNA chaperone small nucleolar RNA (snoRNA) U3.

The protein resides in the nucleus. Its subcellular location is the nucleolus. It catalyses the reaction a cytidine in 18S rRNA + acetyl-CoA + ATP + H2O = an N(4)-acetylcytidine in 18S rRNA + ADP + phosphate + CoA + H(+). It carries out the reaction a cytidine in tRNA + acetyl-CoA + ATP + H2O = an N(4)-acetylcytidine in tRNA + ADP + phosphate + CoA + H(+). RNA cytidine acetyltransferase with specificity toward both 18S rRNA and tRNAs. Catalyzes the formation of N(4)-acetylcytidine (ac4C) in 18S rRNA. Required for early nucleolar cleavages of precursor rRNA at sites A0, A1 and A2 during 18S rRNA synthesis. Catalyzes the formation of ac4C in serine and leucine tRNAs. Requires a tRNA-binding adapter protein for full tRNA acetyltransferase activity but not for 18S rRNA acetylation. Polycomb group (PcG) protein. PcG proteins act by forming multiprotein complexes, which are required to maintain the transcriptionally repressive state of homeotic genes throughout development. PcG proteins are not required to initiate repression, but to maintain it during later stages of development. They probably act via the methylation of histones, rendering chromatin heritably changed in its expressibility. Part of the small subunit (SSU) processome, first precursor of the small eukaryotic ribosomal subunit. During the assembly of the SSU processome in the nucleolus, many ribosome biogenesis factors, an RNA chaperone and ribosomal proteins associate with the nascent pre-rRNA and work in concert to generate RNA folding, modifications, rearrangements and cleavage as well as targeted degradation of pre-ribosomal RNA by the RNA exosome. The chain is RNA cytidine acetyltransferase (l(1)G0020) from Drosophila melanogaster (Fruit fly).